Here is a 124-residue protein sequence, read N- to C-terminus: Putative melanoma-associated antigen 5P (124 aa).

The segment covering 1-14 (MSLEQKSQHCKPEE) has biased composition (basic and acidic residues). Disordered stretches follow at residues 1–69 (MSLE…QGAS) and 82–103 (QSIK…DPES). Residues 3–124 (LEQKSQHCKP…DLIHFLLLKY (122 aa)) form the MAGE domain. Composition is skewed to polar residues over residues 30 to 44 (AATT…SSSP) and 82 to 100 (QSIK…TSPD).

In terms of tissue distribution, expressed in many tumors of several types, such as melanoma, head and neck squamous cell carcinoma, lung carcinoma and breast carcinoma, but not in normal tissues except for testes.

May negatively regulates apoptosis. The chain is Putative melanoma-associated antigen 5P from Homo sapiens (Human).